The primary structure comprises 182 residues: Adenine phosphoribosyltransferase (182 aa).

This sequence belongs to the purine/pyrimidine phosphoribosyltransferase family. In terms of assembly, homodimer.

The protein localises to the cytoplasm. It carries out the reaction AMP + diphosphate = 5-phospho-alpha-D-ribose 1-diphosphate + adenine. It participates in purine metabolism; AMP biosynthesis via salvage pathway; AMP from adenine: step 1/1. In terms of biological role, catalyzes a salvage reaction resulting in the formation of AMP, that is energically less costly than de novo synthesis. The chain is Adenine phosphoribosyltransferase from Saccharopolyspora erythraea (strain ATCC 11635 / DSM 40517 / JCM 4748 / NBRC 13426 / NCIMB 8594 / NRRL 2338).